A 339-amino-acid polypeptide reads, in one-letter code: Alcohol dehydrogenase notN (339 aa).

The Zn(2+) site is built by C44, H65, E66, C99, C102, C110, and C152. H65 lines the an alcohol pocket. NAD(+) contacts are provided by residues 176–181 (GLGGLG), 196–201 (VAISRG), K204, 263–265 (LSF), 287–289 (PSG), and 295–297 (EDA).

Belongs to the zinc-containing alcohol dehydrogenase family. Zn(2+) serves as cofactor.

It carries out the reaction a primary alcohol + NAD(+) = an aldehyde + NADH + H(+). It catalyses the reaction a secondary alcohol + NAD(+) = a ketone + NADH + H(+). Its function is as follows. Alcohol dehydrogenase; part of the gene cluster that mediates the biosynthesis of notoamide, a fungal indole alkaloid that belongs to a family of natural products containing a characteristic bicyclo[2.2.2]diazaoctane core. The first step of notoamide biosynthesis involves coupling of L-proline and L-tryptophan by the bimodular NRPS notE, to produce cyclo-L-tryptophan-L-proline called brevianamide F. The reverse prenyltransferase notF then acts as a deoxybrevianamide E synthase and converts brevianamide F to deoxybrevianamide E via reverse prenylation at C-2 of the indole ring leading to the bicyclo[2.2.2]diazaoctane core. Deoxybrevianamide E is further hydroxylated at C-6 of the indole ring, likely catalyzed by the cytochrome P450 monooxygenase notG, to yield 6-hydroxy-deoxybrevianamide E. 6-hydroxy-deoxybrevianamide E is a specific substrate of the prenyltransferase notC for normal prenylation at C-7 to produce 6-hydroxy-7-prenyl-deoxybrevianamide, also called notoamide S. As the proposed pivotal branching point in notoamide biosynthesis, notoamide S can be diverted to notoamide E through an oxidative pyran ring closure putatively catalyzed by either notH cytochrome P450 monooxygenase or the notD FAD-linked oxidoreductase. This step would be followed by an indole 2,3-epoxidation-initiated pinacol-like rearrangement catalyzed by the notB FAD-dependent monooxygenase leading to the formation of notoamide C and notoamide D. On the other hand notoamide S is converted to notoamide T by notH (or notD), a bifunctional oxidase that also functions as the intramolecular Diels-Alderase responsible for generation of (+)-notoamide T. To generate antipodal (-)-notoaminide T, notH' (or notD') in Aspergillus versicolor is expected to catalyze a Diels-Alder reaction leading to the opposite stereochemistry. The remaining oxidoreductase notD (or notH) likely catalyzes the oxidative pyran ring formation to yield (+)-stephacidin A. The FAD-dependent monooxygenase notI is highly similar to notB and is predicted to catalyze a similar conversion from (+)-stephacidin A to (-)-notoamide B via the 2,3-epoxidation of (+)-stephacidin A followed by a pinacol-type rearrangement. Finally, it remains unclear which enzyme could be responsible for the final hydroxylation steps leading to notoamide A and sclerotiamide. The function of notN in the notoamide biosynthesis has not been determined yet. The sequence is that of Alcohol dehydrogenase notN from Aspergillus sp. (strain MF297-2).